We begin with the raw amino-acid sequence, 285 residues long: Single myb histone 3 (285 aa).

The disordered stretch occupies residues 1-35 (MGAPKQKWTSEEEDALRRGVRKHGAGKWRTIQKDP). One can recognise an HTH myb-type domain in the interval 1–60 (MGAPKQKWTSEEEDALRRGVRKHGAGKWRTIQKDPQFSPILSSRSNIDLKDKWRNLSFSA). Residues 28-56 (WRTIQKDPQFSPILSSRSNIDLKDKWRNL) constitute a DNA-binding region (H-T-H motif). One can recognise an H15 domain in the interval 113 to 181 (TPPKYGAMIM…KVDNFYRLPD (69 aa)). Residues 226–255 (VKVTDAEAKAHDAHDQMMEAERMLKMAEDT) are a coiled coil.

This sequence belongs to the histone H1/H5 family. SMH subfamily. As to quaternary structure, forms a homodimer and heterodimers.

Its subcellular location is the nucleus. It localises to the chromosome. It is found in the nucleolus. The protein localises to the telomere. Binds preferentially double-stranded telomeric repeats, but may also bind to the single telomeric strand. In Zea mays (Maize), this protein is Single myb histone 3 (SMH3).